Here is a 416-residue protein sequence, read N- to C-terminus: Probable tRNA pseudouridine synthase D (416 aa).

Residue aspartate 83 is the Nucleophile of the active site. The TRUD domain maps to glycine 158–arginine 379.

It belongs to the pseudouridine synthase TruD family.

The catalysed reaction is uridine(13) in tRNA = pseudouridine(13) in tRNA. Its function is as follows. Could be responsible for synthesis of pseudouridine from uracil-13 in transfer RNAs. This is Probable tRNA pseudouridine synthase D from Thermococcus onnurineus (strain NA1).